Here is a 434-residue protein sequence, read N- to C-terminus: Angio-associated migratory cell protein (434 aa).

A disordered region spans residues 1 to 63 (MESESESGAA…EEEEEEGNEE (63 aa)). A Phosphoserine modification is found at Ser20. Positions 39–62 (DPDDLAQEMEDVDFEEEEEEEGNE) are enriched in acidic residues. 8 WD repeats span residues 89-129 (LHSA…LLFE), 132-171 (GHKD…EVWS), 173-212 (EAGD…KTFQ), 214-254 (PNCP…HVLK), 258-299 (GHQG…GVFR), 315-354 (SESN…LRHQ), 356-395 (QHQS…LLTD), and 398-433 (GHTA…QRPD).

It localises to the cell membrane. Its subcellular location is the cytoplasm. Its function is as follows. Plays a role in angiogenesis and cell migration. In smooth muscle cell migration, may act through the RhoA pathway. In Pongo abelii (Sumatran orangutan), this protein is Angio-associated migratory cell protein (AAMP).